Here is a 156-residue protein sequence, read N- to C-terminus: Small ribosomal subunit protein uS7c (156 aa).

Belongs to the universal ribosomal protein uS7 family. Part of the 30S ribosomal subunit.

The protein resides in the plastid. It localises to the chloroplast. Its function is as follows. One of the primary rRNA binding proteins, it binds directly to 16S rRNA where it nucleates assembly of the head domain of the 30S subunit. In Gracilaria tenuistipitata var. liui (Red alga), this protein is Small ribosomal subunit protein uS7c (rps7).